A 587-amino-acid chain; its full sequence is Protein NDNF (587 aa).

Residues M1 to A24 form the signal peptide. N109, N129, N190, N321, N334, N459, N498, and N558 each carry an N-linked (GlcNAc...) asparagine glycan.

Binds heparin. Interacts with dally; the interaction promotes dally degradation. Interacts with dpp and gbb.

The protein resides in the secreted. The protein localises to the extracellular space. Its subcellular location is the extracellular matrix. In terms of biological role, secretory protein that acts as a feedback regulator of dpp/BMP, wg and hh signaling pathways. In the developing wing, is a dosage-dependent modulator of dpp/BMP signaling involved in wing growth and crossvein patterning; low levels promote and high levels inhibit dpp/BMP signaling. In the early pupal wing, inhibits dpp/BMP signaling activity to prevent the formation of ectopic crossveins in the posterior compartment. Binds to dpp and gbb to modulate their release and activity decreasing dpp/BMP signaling in the responding cells. During wing development regulates dpp/BMP coreceptor dally availability on the cell surface. Might have a role in testis development. The polypeptide is Protein NDNF (Drosophila melanogaster (Fruit fly)).